We begin with the raw amino-acid sequence, 744 residues long: Tripartite motif-containing protein 2 (744 aa).

At S10 the chain carries Phosphoserine. Residues 23 to 64 form an RING-type zinc finger; that stretch reads CSICLERYKNPKVLPCLHTFCERCLQNYIPAHSLTLSCPVCR. The segment at 113–154 adopts a B box-type zinc-finger fold; sequence GKPLSCPNHDGNVMEFYCQSCETAMCRECTEGEHAEHPTVPL. Zn(2+) is bound by residues C118, H121, C141, and H146. A Filamin repeat occupies 320–421; that stretch reads TTNAVASETV…IRGSPFKLKV (102 aa). Position 371 is a phosphothreonine (T371). Phosphoserine occurs at positions 375, 424, and 428. Positions 432-462 are disordered; that stretch reads EGVKRRVKSPGSGHVKQKAVKRPASMYSTGK. NHL repeat units follow at residues 473–516, 520–563, 564–605, 609–652, 656–699, and 700–743; these read IFRV…FSND, KSRF…FSSD, GKFK…FQPN, VTRF…FNQE, MLKF…FDGS, and GSFL…YRYL.

The protein belongs to the TRIM/RBCC family. In terms of assembly, forms homooligomers. Interacts with TRIM3; this interaction reduces TRIM2 activity. Interacts with myosin V; myosin V may not be a substrate for ubiquitination. Interacts with NEFL. Interacts with phosphorylated BCL2L11. Interacts with SIRPA. RING-type zinc finger-dependent and UBE2D1-dependent autoubiquitination.

It is found in the cytoplasm. It carries out the reaction S-ubiquitinyl-[E2 ubiquitin-conjugating enzyme]-L-cysteine + [acceptor protein]-L-lysine = [E2 ubiquitin-conjugating enzyme]-L-cysteine + N(6)-ubiquitinyl-[acceptor protein]-L-lysine.. It functions in the pathway protein modification; protein ubiquitination. In terms of biological role, UBE2D1-dependent E3 ubiquitin-protein ligase that mediates the ubiquitination of NEFL and of phosphorylated BCL2L11. Plays a neuroprotective function. May play a role in neuronal rapid ischemic tolerance. Plays a role in antiviral immunity and limits New World arenavirus infection independently of its ubiquitin ligase activity. In Homo sapiens (Human), this protein is Tripartite motif-containing protein 2 (TRIM2).